A 242-amino-acid polypeptide reads, in one-letter code: Large ribosomal subunit protein uL1 (242 aa).

It belongs to the universal ribosomal protein uL1 family. Part of the 50S ribosomal subunit.

Functionally, binds directly to 23S rRNA. The L1 stalk is quite mobile in the ribosome, and is involved in E site tRNA release. Its function is as follows. Protein L1 is also a translational repressor protein, it controls the translation of the L11 operon by binding to its mRNA. The protein is Large ribosomal subunit protein uL1 of Persephonella marina (strain DSM 14350 / EX-H1).